The sequence spans 62 residues: uncharacterized protein (62 aa).

A run of 2 helical transmembrane segments spans residues 9–29 (HNELLEFFHLFVTIQWLALIG) and 42–62 (AAVVGFFIRFTFGTPIFLQLL).

It localises to the membrane. This is an uncharacterized protein from Saccharomyces cerevisiae (strain ATCC 204508 / S288c) (Baker's yeast).